A 1226-amino-acid polypeptide reads, in one-letter code: Probable DNA-binding protein SNT1 (1226 aa).

2 disordered regions span residues 1-219 and 264-331; these read MGYP…YSRS and LKST…PDNI. The span at 11–27 shows a compositional bias: basic residues; that stretch reads GDKKRYHYSNNPNRRHP. Polar residues predominate over residues 31 to 64; sequence YSKNSFPKSSNNGFVSSPTADNSTNPSVTPSTAS. Composition is skewed to low complexity over residues 81-103 and 116-131; these read PRPS…SSTR and SSST…NTST. Polar residues-rich tracts occupy residues 132-143 and 150-170; these read ITHTNTDIGNSR and SRYN…SALS. Ser-187 carries the phosphoserine modification. Over residues 202-211 the composition is skewed to low complexity; sequence NNVSSVNNNS. Residues 264–275 are compositionally biased toward polar residues; sequence LKSTHSQSSPSL. Positions 280–304 are enriched in basic and acidic residues; the sequence is FHDANKLDKPEASVKVETPSKDETK. Ser-395 is subject to Phosphoserine. Positions 539–591 form a coiled coil; the sequence is DLQKKYEKECEILTKLSENLRKEEIENKRKEHELMEQKRREEGIETEKEKSLR. Over residues 569–590 the composition is skewed to basic and acidic residues; it reads EHELMEQKRREEGIETEKEKSL. The tract at residues 569 to 605 is disordered; sequence EHELMEQKRREEGIETEKEKSLRHPSSSSSSRRRNRA. One can recognise an SANT domain in the interval 668 to 720; sequence DASDNFTDHEHSLFLEGYLIHPKKFGKISHYMGGLRSPEECVLHYYRTKKTVN. The segment covering 732-745 has biased composition (basic residues); that stretch reads RKMSAAAKRRKRKE. The interval 732–796 is disordered; that stretch reads RKMSAAAKRR…SEVKGDPLGT (65 aa). Over residues 748-758 the composition is skewed to acidic residues; the sequence is NDEEVEVDESK. The span at 759 to 773 shows a compositional bias: basic and acidic residues; it reads EESTNTIEKEEKSEN. Phosphothreonine is present on Thr-796. An HTH myb-type domain is found at 884 to 938; the sequence is APEHKTSYWSVRESQLFPELLKEFGSQWSLISEKLGTKSTTMVRNYYQRNAARNG. The segment at residues 911-934 is a DNA-binding region (H-T-H motif); it reads WSLISEKLGTKSTTMVRNYYQRNA. At Ser-1037 the chain carries Phosphoserine. The tract at residues 1172 to 1194 is disordered; sequence SQGTPTFPLPAPRTSPISRAPPK.

As to quaternary structure, identified in a Set3C complex with SET3, HST1, HOS2, SIF2, CPR1 and HOS4.

Its subcellular location is the nucleus. Its function is as follows. Part of the Set3C complex, which is required to repress early/middle sporulation genes during meiosis. The polypeptide is Probable DNA-binding protein SNT1 (SNT1) (Saccharomyces cerevisiae (strain ATCC 204508 / S288c) (Baker's yeast)).